The chain runs to 103 residues: Small ribosomal subunit protein uS10 (103 aa).

The protein belongs to the universal ribosomal protein uS10 family. In terms of assembly, part of the 30S ribosomal subunit.

In terms of biological role, involved in the binding of tRNA to the ribosomes. The polypeptide is Small ribosomal subunit protein uS10 (Chlorobium chlorochromatii (strain CaD3)).